A 445-amino-acid chain; its full sequence is Homogentisate 1,2-dioxygenase (445 aa).

Lys98 is modified (N6-acetyllysine). Fe cation is bound by residues His335, Glu341, and His371. Lys414 is modified (N6-succinyllysine).

The protein belongs to the homogentisate dioxygenase family. Homohexamer arranged as a dimer of trimers. The cofactor is Fe cation.

The catalysed reaction is homogentisate + O2 = 4-maleylacetoacetate + H(+). It functions in the pathway amino-acid degradation; L-phenylalanine degradation; acetoacetate and fumarate from L-phenylalanine: step 4/6. Functionally, catalyzes the conversion of homogentisate to maleylacetoacetate. In Mus musculus (Mouse), this protein is Homogentisate 1,2-dioxygenase (Hgd).